The following is a 272-amino-acid chain: F-box protein PP2-B10 (272 aa).

Positions S11 to F57 constitute an F-box domain.

Part of a SCF (ASK-cullin-F-box) protein ligase complex. Interacts with SKP1B/ASK2, ASK11 and ASK12.

The protein operates within protein modification; protein ubiquitination. In terms of biological role, component of SCF(ASK-cullin-F-box) E3 ubiquitin ligase complexes, which may mediate the ubiquitination and subsequent proteasomal degradation of target proteins. The sequence is that of F-box protein PP2-B10 (PP2B10) from Arabidopsis thaliana (Mouse-ear cress).